The primary structure comprises 291 residues: Phosphatidylglycerol--prolipoprotein diacylglyceryl transferase (291 aa).

The next 4 membrane-spanning stretches (helical) occupy residues 24–44 (WYAL…RALL), 64–84 (FILW…VLFY), 100–120 (WNGG…VILF), and 125–145 (GLPI…GLFL). An a 1,2-diacyl-sn-glycero-3-phospho-(1'-sn-glycerol)-binding site is contributed by R147. 3 helical membrane passes run 187 to 207 (AALE…LGAL), 211 to 231 (GLVL…AEFF), and 247 to 267 (MGML…YAAW).

Belongs to the Lgt family.

It localises to the cell inner membrane. It catalyses the reaction L-cysteinyl-[prolipoprotein] + a 1,2-diacyl-sn-glycero-3-phospho-(1'-sn-glycerol) = an S-1,2-diacyl-sn-glyceryl-L-cysteinyl-[prolipoprotein] + sn-glycerol 1-phosphate + H(+). It functions in the pathway protein modification; lipoprotein biosynthesis (diacylglyceryl transfer). Catalyzes the transfer of the diacylglyceryl group from phosphatidylglycerol to the sulfhydryl group of the N-terminal cysteine of a prolipoprotein, the first step in the formation of mature lipoproteins. This chain is Phosphatidylglycerol--prolipoprotein diacylglyceryl transferase, found in Nitrobacter winogradskyi (strain ATCC 25391 / DSM 10237 / CIP 104748 / NCIMB 11846 / Nb-255).